Here is a 327-residue protein sequence, read N- to C-terminus: Flotillin-like protein FloA (327 aa).

A helical membrane pass occupies residues 2–22; it reads IGLIIIVVIVLVALLLLFSFV. The disordered stretch occupies residues 305–327; that stretch reads ADTGMRNSINQRTNQKDDESPDK. The span at 318 to 327 shows a compositional bias: basic and acidic residues; sequence NQKDDESPDK.

It belongs to the flotillin-like FloA family. As to quaternary structure, homooligomerizes.

The protein localises to the cell membrane. It localises to the membrane raft. In terms of biological role, found in functional membrane microdomains (FMM) that may be equivalent to eukaryotic membrane rafts. FMMs are highly dynamic and increase in number as cells age. Flotillins are thought to be important factors in membrane fluidity. The polypeptide is Flotillin-like protein FloA (Staphylococcus saprophyticus subsp. saprophyticus (strain ATCC 15305 / DSM 20229 / NCIMB 8711 / NCTC 7292 / S-41)).